Reading from the N-terminus, the 314-residue chain is uncharacterized protein (314 aa).

2 helical membrane passes run 23 to 43 (LALG…MALF) and 98 to 118 (MASG…GPLT). Over residues 165-184 (GLGSGAGGGDVGGGGAGGTT) the composition is skewed to gly residues. The interval 165-314 (GLGSGAGGGD…APDEKTDAGE (150 aa)) is disordered. The span at 190-202 (GPPPVPTSSPPTT) shows a compositional bias: pro residues. 2 stretches are compositionally biased toward low complexity: residues 203 to 212 (PAGAPTKSAT) and 219 to 232 (ASPA…AGMP). Residues 221 to 241 (PASAHMGAAGMPMVPPGAMGA) form a helical membrane-spanning segment. Basic and acidic residues predominate over residues 294-314 (LLPEHKDFGRIAPDEKTDAGE).

It is found in the cell membrane. This is an uncharacterized protein from Mycobacterium tuberculosis (strain CDC 1551 / Oshkosh).